The chain runs to 302 residues: Uricase (302 aa).

Residue Ser-2 is modified to N-acetylserine. Active-site charge relay system residues include Lys-11 and Thr-58. Residues Thr-58, Asp-59, Phe-160, Arg-177, Val-228, Gln-229, and Asn-255 each coordinate 5-hydroxyisourate. Thr-58 contributes to the O2 binding site. Positions 58, 59, 160, 177, 228, 229, and 255 each coordinate urate. Asn-255 lines the O2 pocket. Catalysis depends on His-257, which acts as the Charge relay system. A Microbody targeting signal motif is present at residues 300-302 (SKL).

It belongs to the uricase family. As to quaternary structure, homotetramer.

It localises to the peroxisome. The catalysed reaction is urate + O2 + H2O = 5-hydroxyisourate + H2O2. Its pathway is purine metabolism; urate degradation; (S)-allantoin from urate: step 1/3. 8-Azaxanthine is one of the most potent competitive inhibitors of uricase activity. Hypoxanthine has only a small inhibitor effect, and caffeine has no effect at all. Azide not only competes with dioxygen but also competes with the substrate for its enzymatic site. In terms of biological role, urate oxidase is a cofactorless enzyme involved in the metabolism of purines. Catalyzes, in the presence of molecular oxygen, the hydroxylation of uric acid to metastable 5-hydroxyisourate (5-HIU) which is further degraded to allantoin. This is Uricase from Aspergillus flavus.